Reading from the N-terminus, the 710-residue chain is DNA ligase (710 aa).

NAD(+) is bound by residues 53 to 57, 102 to 103, and Glu136; these read DAEYD and SL. Residue Lys138 is the N6-AMP-lysine intermediate of the active site. Arg159, Glu196, Lys312, and Lys336 together coordinate NAD(+). Residues Cys429, Cys432, Cys453, and Cys459 each coordinate Zn(2+). Positions 633–710 constitute a BRCT domain; that stretch reads ETSSPVAGKT…DEDQWIELAG (78 aa).

The protein belongs to the NAD-dependent DNA ligase family. LigA subfamily. It depends on Mg(2+) as a cofactor. Mn(2+) serves as cofactor.

The catalysed reaction is NAD(+) + (deoxyribonucleotide)n-3'-hydroxyl + 5'-phospho-(deoxyribonucleotide)m = (deoxyribonucleotide)n+m + AMP + beta-nicotinamide D-nucleotide.. Its function is as follows. DNA ligase that catalyzes the formation of phosphodiester linkages between 5'-phosphoryl and 3'-hydroxyl groups in double-stranded DNA using NAD as a coenzyme and as the energy source for the reaction. It is essential for DNA replication and repair of damaged DNA. The polypeptide is DNA ligase (Parvibaculum lavamentivorans (strain DS-1 / DSM 13023 / NCIMB 13966)).